The following is a 654-amino-acid chain: RING finger protein 112 (654 aa).

Residues 80–121 (CSICLERLREPISLDCGHDFCIRCFSTHRIPGCELPCCPECR) form an RING-type zinc finger. An interaction with ZBTB16 region spans residues 154–654 (AVRAERLLLV…GDREPLLQEE (501 aa)). The GB1/RHD3-type G domain occupies 189–420 (DTPVCLLAVL…YILDVLSTAP (232 aa)). 340 to 341 (RD) serves as a coordination point for GTP. 2 helical membrane passes run 570 to 590 (LAAVGGAVGAGLMGLAGGVVG) and 603 to 623 (GMVAAGAAVGATGAAVVGGGV).

The protein belongs to the TRAFAC class dynamin-like GTPase superfamily. GB1/RHD3 GTPase family. GB1 subfamily. In terms of assembly, self-associates. Interacts with SP1 in an oxidative stress-regulated manner. Interacts with SIGMAR1 in an oxidative stress-regulated manner. Interacts with ZBTB16 (via C2H2-type zinc finger domains 1 and 2). In terms of processing, auto-ubiquitinated. In terms of tissue distribution, expressed in most of the brain areas, including cortex, striatum, hippocampus, thalamus, and cerebellum (at protein level). Expressed in lateral amygdaloid nucleus, and ventromedial hypothalamus. Also expressed strongly in the marginal zone of brain vesicles, optic stalk, and cartilage primordium.

It is found in the membrane. The protein localises to the cytoplasm. Its subcellular location is the nucleus. The protein resides in the nuclear body. It localises to the nucleoplasm. It is found in the endosome. The protein localises to the cytoplasmic vesicle. Its subcellular location is the secretory vesicle. The protein resides in the synaptic vesicle. It localises to the postsynaptic density. It is found in the perikaryon. The protein localises to the cell projection. Its subcellular location is the neuron projection. It catalyses the reaction S-ubiquitinyl-[E2 ubiquitin-conjugating enzyme]-L-cysteine + [acceptor protein]-L-lysine = [E2 ubiquitin-conjugating enzyme]-L-cysteine + N(6)-ubiquitinyl-[acceptor protein]-L-lysine.. Its pathway is protein modification; protein ubiquitination. In terms of biological role, E3 ubiquitin-protein ligase that plays an important role in neuronal differentiation, including neurogenesis and gliogenesis, during brain development. During embryonic development initiates neuronal differentiation by inducing cell cycle arrest at the G0/G1 phase through up-regulation of cell-cycle regulatory proteins. Plays a role not only in the fetal period during the development of the nervous system, but also in the adult brain, where it is involved in the maintenance of neural functions and protection of the nervous tissue cells from oxidative stress-induced damage. Exhibits GTPase and E3 ubiquitin-protein ligase activities. Regulates dendritic spine density and synaptic neurotransmission; its ability to hydrolyze GTP is involved in the maintenance of dendritic spine density. The protein is RING finger protein 112 (Rnf112) of Mus musculus (Mouse).